A 155-amino-acid chain; its full sequence is Ribosome maturation factor RimP (155 aa).

The protein belongs to the RimP family.

The protein resides in the cytoplasm. Its function is as follows. Required for maturation of 30S ribosomal subunits. In Prochlorococcus marinus (strain MIT 9211), this protein is Ribosome maturation factor RimP.